A 539-amino-acid chain; its full sequence is Protein mushroom body miniature (539 aa).

A compositionally biased stretch (polar residues) spans 1-11 (MHNSGGQSGWN). The disordered stretch occupies residues 1 to 345 (MHNSGGQSGW…EDDKKARKQK (345 aa)). Residues 67–79 (KFRDPQQELDNHQ) show a composition bias toward basic and acidic residues. Over residues 80 to 89 (PNKRGGRRNR) the composition is skewed to basic residues. A compositionally biased stretch (gly residues) spans 90–101 (GGGGGGGGWGGR). Residues 199 to 208 (IKKEKEMEHK) are compositionally biased toward basic and acidic residues. Residues 268–289 (VASTPKPKAVKPVSSSDSSTSD) show a composition bias toward low complexity. Residues Ser288 and Ser290 each carry the phosphoserine modification. Phosphothreonine occurs at positions 292 and 327. Residues 327 to 336 (TDEEESTEPE) are compositionally biased toward acidic residues. Position 332 is a phosphoserine (Ser332). Thr333 carries the phosphothreonine modification. CCHC-type zinc fingers lie at residues 354 to 367 (CGIC…SFQC) and 371 to 386 (CRNC…NCPN). The disordered stretch occupies residues 421–513 (VTAPVSAKPK…AASLPPQVFP (93 aa)). A compositionally biased stretch (basic residues) spans 428–447 (KPKKDKKASIKKIKKSSQKR). Acidic residues predominate over residues 456–480 (DEEDDEEDDDEDEDDSSESDDSESS).

Post-translationally, may be phosphorylated in vivo by CkIIalpha. mbm and CkIIalpha colocalize to the nucleolus and mbm is phosphorylated in vitro by CkIIalpha. Shows widespread expression in third instar larval brain with no apparent difference between males and females (at protein level). Detected at low levels in the mushroom body neuropil and is also expressed in many cells of the brain outside the mushroom body (at protein level). Not detected in third instar larval brain cells in anaphase (at protein level).

Its subcellular location is the nucleus. It is found in the nucleolus. The protein resides in the cytoplasm. Required for small ribosomal subunit biogenesis in neuroblasts. Plays a role in mushroom body development. The polypeptide is Protein mushroom body miniature (Drosophila melanogaster (Fruit fly)).